Reading from the N-terminus, the 207-residue chain is Phycobilisome maturation protein (207 aa).

It belongs to the CpcE/RpcE/PecE family. CpcE and CpcF associate to form a lyase.

Required for the chromophorylation of the cpcA gene product. The polypeptide is Phycobilisome maturation protein (cpcF) (Synechococcus elongatus (strain ATCC 33912 / PCC 7942 / FACHB-805) (Anacystis nidulans R2)).